We begin with the raw amino-acid sequence, 284 residues long: TM2 domain-containing protein almondex (284 aa).

Positions 1 to 32 (MRLQRQCIVVNMRSAIVLIMIFVLTGIRNSET) are cleaved as a signal peptide. The interval 33–63 (ASGGNQMDLSDSKGDHKDNSNASNGNGNAND) is disordered. Topologically, residues 33 to 225 (ASGGNQMDLS…NWTQGYRWST (193 aa)) are extracellular. The segment covering 42-51 (SDSKGDHKDN) has biased composition (basic and acidic residues). Over residues 52-63 (SNASNGNGNAND) the composition is skewed to low complexity. Asn-53, Asn-89, Asn-141, Asn-194, Asn-206, and Asn-216 each carry an N-linked (GlcNAc...) asparagine glycan. One can recognise a TM2 domain in the interval 220–267 (GYRWSTALLISLTLGGFGADRFYLGHWQEGIGKLFSFGGLGVWTIIDV). The helical transmembrane segment at 226–246 (ALLISLTLGGFGADRFYLGHW) threads the bilayer. The Cytoplasmic portion of the chain corresponds to 247-249 (QEG). Residues 250 to 270 (IGKLFSFGGLGVWTIIDVLLI) traverse the membrane as a helical segment. The Extracellular segment spans residues 271 to 284 (SMHYLGPADGSLYI).

It belongs to the TM2 family. In terms of tissue distribution, expressed in female ovary, mainly in nurse cells (at protein level). Expressed in the brain at low levels (at protein level).

The protein resides in the membrane. It is found in the vesicle. In terms of biological role, positive regulator of Notch signaling during lateral inhibition and boundary formation. Interacts with Notch signaling at the membrane, at the level of gamma-secretase-mediated S3 cleavage. May regulate Notch signaling by regulating the subcellular localization of N/Notch in a context dependent manner. Maternal neurogenic factor involved in Notch signaling-dependent mesectodermal and neuroectodermal specification during early embryogenesis. Functions cooperatively with bisc/TM2D1 and amrt/TM2D2. Required for maintenance of neuronal function. Involved in imaginal specification of eyes and wings. The protein is TM2 domain-containing protein almondex of Drosophila melanogaster (Fruit fly).